The chain runs to 562 residues: Arginine--tRNA ligase (562 aa).

The 'HIGH' region motif lies at A129–H139.

This sequence belongs to the class-I aminoacyl-tRNA synthetase family. As to quaternary structure, monomer.

It localises to the cytoplasm. It carries out the reaction tRNA(Arg) + L-arginine + ATP = L-arginyl-tRNA(Arg) + AMP + diphosphate. In Xanthomonas axonopodis pv. citri (strain 306), this protein is Arginine--tRNA ligase.